The primary structure comprises 375 residues: Guanine nucleotide-binding protein subunit beta (375 aa).

WD repeat units lie at residues 63-93 (GHTG…IVWN), 105-135 (LPCA…SIYN), 154-185 (GHKG…VLWD), 202-233 (GHTA…RLWD), 246-276 (GHEG…RLFD), 293-323 (GDIP…YVWD), and 339-369 (SHEG…KIWA).

Belongs to the WD repeat G protein beta family. In terms of assembly, g proteins are composed of 3 units, alpha, beta and gamma.

Guanine nucleotide-binding proteins (G proteins) are involved as a modulator or transducer in various transmembrane signaling systems. The beta and gamma chains are required for the GTPase activity, for replacement of GDP by GTP, and for G protein-effector interaction. This is Guanine nucleotide-binding protein subunit beta from Nicotiana tabacum (Common tobacco).